The sequence spans 833 residues: DNA gyrase subunit A (833 aa).

Residues 35–498 (LPDVRDGMKP…SEDMFEDEDL (464 aa)) form the Topo IIA-type catalytic domain. Tyrosine 123 functions as the O-(5'-phospho-DNA)-tyrosine intermediate in the catalytic mechanism. The GyrA-box signature appears at 525 to 531 (QKRGGRG). The interval 803–833 (RVDIEDDELDEDESIEEERDDRSEVEQGENE) is disordered. Residues 806–821 (IEDDELDEDESIEEER) are compositionally biased toward acidic residues.

It belongs to the type II topoisomerase GyrA/ParC subunit family. In terms of assembly, heterotetramer, composed of two GyrA and two GyrB chains. In the heterotetramer, GyrA contains the active site tyrosine that forms a transient covalent intermediate with DNA, while GyrB binds cofactors and catalyzes ATP hydrolysis.

It localises to the cytoplasm. It catalyses the reaction ATP-dependent breakage, passage and rejoining of double-stranded DNA.. A type II topoisomerase that negatively supercoils closed circular double-stranded (ds) DNA in an ATP-dependent manner to modulate DNA topology and maintain chromosomes in an underwound state. Negative supercoiling favors strand separation, and DNA replication, transcription, recombination and repair, all of which involve strand separation. Also able to catalyze the interconversion of other topological isomers of dsDNA rings, including catenanes and knotted rings. Type II topoisomerases break and join 2 DNA strands simultaneously in an ATP-dependent manner. This Halalkalibacterium halodurans (strain ATCC BAA-125 / DSM 18197 / FERM 7344 / JCM 9153 / C-125) (Bacillus halodurans) protein is DNA gyrase subunit A.